A 959-amino-acid polypeptide reads, in one-letter code: Mitogen-activated protein kinase kinase kinase 13 (959 aa).

The tract at residues 1–47 is disordered; it reads MANPQEHLSCSSLPHLPLTENKTSGGRNELAAMGNHPSPKLPEDPQE. Residues 7-18 show a composition bias toward low complexity; sequence HLSCSSLPHLPL. One can recognise a Protein kinase domain in the interval 167 to 408; the sequence is ISELQWLGSG…FRQTLMHLDI (242 aa). Residues 173–181 and Lys194 each bind ATP; that span reads LGSGAQGAV. Asp278 acts as the Proton acceptor in catalysis. 2 leucine-zipper regions span residues 432 to 453 and 485 to 506; these read VKKH…DEEL and LSAI…EQAV. 4 disordered regions span residues 533–599, 739–828, 842–902, and 927–959; these read KRKG…GSHS, GSLD…RQRP, SSEN…LSDK, and NPVQ…SATW. The segment covering 566-577 has biased composition (polar residues); it reads SPLSGSPKMSTA. The segment covering 581 to 593 has biased composition (basic residues); the sequence is SRYRSKPRHRRGN. Composition is skewed to polar residues over residues 754–774 and 780–790; these read DLSS…SERT and SGCQSGISHQF. Residues 808–820 show a composition bias toward acidic residues; it reads DSSEEEGEVDSEV. Over residues 866–876 the composition is skewed to basic and acidic residues; it reads SANRRQDRLAE. Acidic residues predominate over residues 934 to 943; the sequence is SDCDSSEGEC. The span at 947–959 shows a compositional bias: polar residues; that stretch reads TVRTSKNYSSATW.

The protein belongs to the protein kinase superfamily. STE Ser/Thr protein kinase family. MAP kinase kinase kinase subfamily. In terms of assembly, homodimer; forms dimers through the leucine-zipper motif. Interacts with the C-terminus of MAPK8IP1 through the kinase catalytic domain. Binds PRDX3. Associates with the IKK complex through the kinase domain. It depends on Mg(2+) as a cofactor. Autophosphorylated on serine and threonine residues.

It localises to the cytoplasm. The protein localises to the membrane. The enzyme catalyses L-seryl-[protein] + ATP = O-phospho-L-seryl-[protein] + ADP + H(+). The catalysed reaction is L-threonyl-[protein] + ATP = O-phospho-L-threonyl-[protein] + ADP + H(+). With respect to regulation, activated by autophosphorylation and homodimerization. Functionally, activates the JUN N-terminal pathway through activation of the MAP kinase kinase MAP2K7. Acts synergistically with PRDX3 to regulate the activation of NF-kappa-B in the cytosol. This activation is kinase-dependent and involves activating the IKK complex, the IKBKB-containing complex that phosphorylates inhibitors of NF-kappa-B. This Mus musculus (Mouse) protein is Mitogen-activated protein kinase kinase kinase 13 (Map3k13).